Reading from the N-terminus, the 552-residue chain is NADH-ubiquinone oxidoreductase chain 5 (552 aa).

15 consecutive transmembrane segments (helical) span residues 11 to 31, 36 to 56, 68 to 88, 89 to 109, 121 to 141, 152 to 172, 196 to 216, 229 to 249, 256 to 274, 287 to 307, 322 to 342, 365 to 386, 406 to 426, 453 to 473, and 532 to 552; these read PVTIHLGTWISLGDIVIPFGL, LAMTVIVPVGIITLCVLAYAI, FYIILSIFAVFMTILVVSDNY, LMMFIGWEFVGVISYLLISFW, SAILLNRMGDTFFVIALGLMI, IALVTPYMNTFLLNTLGLLLL, TPVSALLHAATMVCAGVYVLV, LLIICWLGGLTTLVSGLIAIV, VIALSTMSQLSIMVLAIGI, HAFFKALLFMGAGSVIHSFVA, LPFSYTAILIASLSLMAIPGL, ILYYIAVGSATLTSIYSLRVLY, SLGMMIPMIVLVIYSIFIGYS, AYIKLLPLILGLTLSAILVYV, and SRAVTYINVIVIINILYLFFI.

It belongs to the complex I subunit 5 family.

It localises to the mitochondrion inner membrane. The catalysed reaction is a ubiquinone + NADH + 5 H(+)(in) = a ubiquinol + NAD(+) + 4 H(+)(out). Its function is as follows. Core subunit of the mitochondrial membrane respiratory chain NADH dehydrogenase (Complex I) that is believed to belong to the minimal assembly required for catalysis. Complex I functions in the transfer of electrons from NADH to the respiratory chain. The immediate electron acceptor for the enzyme is believed to be ubiquinone. The protein is NADH-ubiquinone oxidoreductase chain 5 (NAD5) of Candida albicans (strain SC5314 / ATCC MYA-2876) (Yeast).